A 242-amino-acid chain; its full sequence is Basic agglutinin (242 aa).

N-linked (GlcNAc...) asparagine glycans are attached at residues Asn-45 and Asn-220.

Belongs to the leguminous lectin family.

Lectin. The chain is Basic agglutinin (WBAI) from Psophocarpus tetragonolobus (Winged bean).